Here is a 158-residue protein sequence, read N- to C-terminus: Ecotin (158 aa).

Residues 1–21 (MRLLPLASVTLLSVLCAQAFA) form the signal peptide. Cysteine 67 and cysteine 104 are joined by a disulfide.

This sequence belongs to the protease inhibitor I11 (ecotin) family. As to quaternary structure, homodimer.

It localises to the periplasm. In terms of biological role, general inhibitor of family S1 serine proteases. The protein is Ecotin of Pseudomonas fluorescens (strain ATCC BAA-477 / NRRL B-23932 / Pf-5).